Reading from the N-terminus, the 286-residue chain is MTAQLIDGKAIAQTIRSTLKQKVAARIEAGKRAPGLAVILVGLDAASKIYVGSKRRACEEVGFESRSFDLDINTSEADLLALIDKCNQDPSIDGILVQLPLPEHIDDSKVIERIRPDKDVDGFHPYNVGRLAQRIPVLRPCTPLGIMTLIKSTGVDTYGLDATIVGASNIVGRPMTLELLLAGCTTTTCHRFTKNLEQKVRQADLLVVAVGKPGFILGEWIKPGAIVIDVGINRLENGSLVGDVEFDAASQHAGFITPVPGGVGPMTIACLLENTLYAAETYHDVN.

NADP(+) contacts are provided by residues 166-168 (GAS) and I232.

It belongs to the tetrahydrofolate dehydrogenase/cyclohydrolase family. In terms of assembly, homodimer.

The catalysed reaction is (6R)-5,10-methylene-5,6,7,8-tetrahydrofolate + NADP(+) = (6R)-5,10-methenyltetrahydrofolate + NADPH. It carries out the reaction (6R)-5,10-methenyltetrahydrofolate + H2O = (6R)-10-formyltetrahydrofolate + H(+). It functions in the pathway one-carbon metabolism; tetrahydrofolate interconversion. Its function is as follows. Catalyzes the oxidation of 5,10-methylenetetrahydrofolate to 5,10-methenyltetrahydrofolate and then the hydrolysis of 5,10-methenyltetrahydrofolate to 10-formyltetrahydrofolate. The chain is Bifunctional protein FolD from Shewanella denitrificans (strain OS217 / ATCC BAA-1090 / DSM 15013).